The sequence spans 510 residues: DAP3-binding cell death enhancer 1 (510 aa).

Residues 1–23 (MWRLTGILGRALPRLLGPGFRGI) constitute a mitochondrion transit peptide. 2 disordered regions span residues 19-61 (GFRG…SRDP) and 142-185 (VLPR…SGLL). Positions 24–101 (TPKPTSSDGS…AVLALHLARQ (78 aa)) are cleaved as a propeptide — extended MTS. A compositionally biased stretch (low complexity) spans 35–45 (TTSPTLPLTRL). 2 stretches are compositionally biased toward basic and acidic residues: residues 46-61 (SFDRSGSHGSKRSRDP) and 155-167 (GLREPRQGQEDHP). The segment covering 169–181 (APSQCLPSDSSLR) has biased composition (polar residues). TPR repeat units lie at residues 213–245 (AHPPGGKNEQDKAKALPLEEAVTSIQQLFQLSV), 246–278 (AITFNFLGTENIKTGDYTAAFSYFQKAADRGYS), 279–313 (KAQYNVGLCLEHGRGTPRDLSKAILFYHLAAVQGH), 314–351 (SLAQYRYARCLLQSPGSLSDPERERAVSLLKQAADSGL), 352–385 (TEAQAFLGVLFTKEPHLDEQRAVKYLWLAASNGD), 386–423 (SQSRFHLGICYEKGLGAQRNLGEAVKCYQQAAAMGNEP), and 471–499 (ASSTGNLGLLCRSGHLGASHGAPSRTIPS). Positions 307 to 326 (LAAVQGHSLAQYRYARCLLQ) match the SIFI-degron motif.

This sequence belongs to the DELE1 family. Interacts with DAP3. In terms of assembly, interacts (via TPR repeats) with EIF2AK1/HRI; activating the protein kinase activity of EIF2AK1/HRI, thereby promoting the integrated stress response (ISR). As to quaternary structure, homooctamer; oligomerization is required to activate EIF2AK1/HRI. Interacts (via TPR repeats) with EIF2AK1/HRI; activating the protein kinase activity of EIF2AK1/HRI, thereby promoting the integrated stress response (ISR). In terms of processing, unstable protein in absence of stress: imported in the mitochondrial matrix following processing by the mitochondrial-processing peptidase (MPP), where it is degraded by LONP1. Stabilized in response to iron deficiency: iron deficiency impairs mitochondrial import, promoting localization at the mitochondrial surface and stabilization. Cleaved by OMA1 in response to mitochondrial stress, generating the DAP3-binding cell death enhancer 1 short form (DELE1(S) or S-DELE1) that accumulates in the cytosol and activates the protein kinase activity of EIF2AK1/HRI. Protein cleavage by OMA1 can take place at different positions, and apparently does not require a specific sequence motif. Post-translationally, ubiquitinated and degraded by the SIFI complex once the mitochondrial stress has been resolved, thereby providing stress response silencing. Within the SIFI complex, UBR4 initiates ubiquitin chain that are further elongated or branched by KCMF1.

Its subcellular location is the mitochondrion. It localises to the mitochondrion outer membrane. The protein resides in the mitochondrion inner membrane. It is found in the cytoplasm. The protein localises to the cytosol. Its function is as follows. Protein kinase activator that acts as a key activator of the integrated stress response (ISR) following various stresses, such as iron deficiency, mitochondrial stress or mitochondrial DNA breaks. Detects impaired protein import and processing in mitochondria, activating the ISR. May also required for the induction of death receptor-mediated apoptosis through the regulation of caspase activation. Functionally, protein kinase activator that activates the ISR in response to iron deficiency: iron deficiency impairs mitochondrial import, promoting DELE1 localization at the mitochondrial surface, where it binds and activates EIF2AK1/HRI to trigger the ISR. In terms of biological role, protein kinase activator generated by protein cleavage in response to mitochondrial stress, which accumulates in the cytosol and specifically binds to and activates the protein kinase activity of EIF2AK1/HRI. It thereby activates the integrated stress response (ISR): EIF2AK1/HRI activation promotes eIF-2-alpha (EIF2S1) phosphorylation, leading to a decrease in global protein synthesis and the induction of selected genes, including the transcription factor ATF4, the master transcriptional regulator of the ISR. Also acts as an activator of PRKN-independent mitophagy: activates the protein kinase activity of EIF2AK1/HRI in response to mitochondrial damage, promoting eIF-2-alpha (EIF2S1) phosphorylation, leading to mitochondrial localization of EIF2S1 followed by induction of mitophagy. The protein is DAP3-binding cell death enhancer 1 of Mus musculus (Mouse).